The following is a 603-amino-acid chain: Dual specificity protein phosphatase CDC14A (603 aa).

An a region spans residues 7–162 (ELIGACEFMK…GLQHGFFDFE (156 aa)). Residues 163–176 (TFDAEEYEHYERVE) form a linker region. The tract at residues 177-343 (NGDFNWIVPG…QGDIFRSKLK (167 aa)) is b. Residues 179–336 (DFNWIVPGKF…KQASLWVQGD (158 aa)) form the Tyrosine-protein phosphatase domain. Cys278 serves as the catalytic Phosphocysteine intermediate. Residue Ser484 is modified to Phosphoserine. The span at 518 to 538 (NGSTQTPGRNYPELNNNQYTR) shows a compositional bias: polar residues. Residues 518–583 (NGSTQTPGRN…RPSFPGSLSS (66 aa)) are disordered. Composition is skewed to low complexity over residues 539 to 558 (SSNS…LNSS) and 573 to 583 (LRPSFPGSLSS). Ser592 carries the post-translational modification Phosphoserine.

This sequence belongs to the protein-tyrosine phosphatase family. Non-receptor class CDC14 subfamily. As to quaternary structure, interacts with KIF20A. Interaction is required to localize CDC14 to the midzone of the mitotic spindle. As to expression, expressed in the inner ear.

Its subcellular location is the nucleus. It localises to the cytoplasm. The protein resides in the cytoskeleton. The protein localises to the microtubule organizing center. It is found in the centrosome. Its subcellular location is the spindle. It localises to the cell projection. The protein resides in the kinocilium. The protein localises to the spindle pole. It is found in the stereocilium. The catalysed reaction is O-phospho-L-tyrosyl-[protein] + H2O = L-tyrosyl-[protein] + phosphate. It carries out the reaction O-phospho-L-seryl-[protein] + H2O = L-seryl-[protein] + phosphate. The enzyme catalyses O-phospho-L-threonyl-[protein] + H2O = L-threonyl-[protein] + phosphate. Dual-specificity phosphatase. Required for centrosome separation and productive cytokinesis during cell division. Dephosphorylates SIRT2 around early anaphase. May dephosphorylate the APC subunit FZR1/CDH1, thereby promoting APC-FZR1 dependent degradation of mitotic cyclins and subsequent exit from mitosis. Required for normal hearing. The protein is Dual specificity protein phosphatase CDC14A (Cdc14a) of Mus musculus (Mouse).